Consider the following 413-residue polypeptide: Alpha-1-antitrypsin 1-1 (413 aa).

Residues Met1–Ala24 form the signal peptide. 3 N-linked (GlcNAc...) asparagine glycosylation sites follow: Asn64, Asn101, and Asn265. Positions Ala368–His387 are RCL.

It belongs to the serpin family.

It is found in the secreted. Functionally, inhibitor of serine proteases. Its primary target is elastase, but it also has a moderate affinity for plasmin and thrombin. In Mus musculus (Mouse), this protein is Alpha-1-antitrypsin 1-1 (Serpina1a).